The chain runs to 122 residues: uncharacterized protein (122 aa).

Positions 79–114 (VIEDVASAIKEMMESAAKDLDKIEEVIKESLEKYLR) form a coiled coil.

This is an uncharacterized protein from Archaeoglobus fulgidus (strain ATCC 49558 / DSM 4304 / JCM 9628 / NBRC 100126 / VC-16).